A 1038-amino-acid polypeptide reads, in one-letter code: Kinesin-like protein KIF17 (1038 aa).

The Kinesin motor domain occupies 5–335; it reads SVKVVVRCRP…LRYANRAKNI (331 aa). Residue 91–98 coordinates ATP; sequence GQTGSGKS. The stretch at 346 to 470 forms a coiled coil; it reads KDALLREYQE…ETEAILKAEV (125 aa). 3 disordered regions span residues 379–401, 503–559, and 636–657; these read TQTP…VQQD, LSMP…GPEE, and DSSQ…LLEP. 2 stretches are compositionally biased toward polar residues: residues 533-551 and 636-651; these read SEFS…SATS and DSSQ…QPSS. Residues 748–855 adopt a coiled-coil conformation; it reads QQVLARLQLL…QLEKIDYLAT (108 aa). Disordered stretches follow at residues 916–940 and 976–1038; these read VVPT…PHMQ and MKSL…GEPL. Low complexity predominate over residues 983–1000; sequence NSPPGLNSSLSNNSALPP.

Belongs to the TRAFAC class myosin-kinesin ATPase superfamily. Kinesin family. In terms of assembly, homodimer. Interacts with APBA1 (via PDZ domain); the interaction is direct and is required for association of KIF17 with the cargo that is to be transported. Interacts with IFT B complex components IFT52 and IFT57. Interacts with IFT70B. Interacts with PIWIL1. Interacts with TBATA. Highly expressed in the gray matter of the brain, especially in the hippocampus.

It localises to the cytoplasm. Its subcellular location is the cytoskeleton. It is found in the cell projection. The protein resides in the cilium. The protein localises to the dendrite. In terms of biological role, dendrite-specific motor protein which, in association with the Apba1-containing complex (LIN-10-LIN-2-LIN-7 complex), transports vesicles containing N-methyl-D-aspartate (NMDA) receptor subunit NR2B along microtubules. This is Kinesin-like protein KIF17 (Kif17) from Mus musculus (Mouse).